The following is a 213-amino-acid chain: Sclerostin (213 aa).

The first 28 residues, 1-28 (MQLSLAPCLACLLVHAAFVAVESQGWQA), serve as a signal peptide directing secretion. Asn-53 is a glycosylation site (N-linked (GlcNAc...) asparagine). 4 disulfide bridges follow: Cys-80–Cys-134, Cys-94–Cys-148, Cys-105–Cys-165, and Cys-109–Cys-167. The CTCK domain maps to 82-172 (ELHYTRFVTD…ASCKCKRLTR (91 aa)). A glycan (N-linked (GlcNAc...) asparagine) is linked at Asn-175. The segment at 178-213 (ELKDFGPETARPQKGRKPRPRARGAKANQAELENAY) is disordered. Over residues 190–201 (QKGRKPRPRARG) the composition is skewed to basic residues.

It belongs to the sclerostin family. In terms of assembly, interacts with LRP4 (via the extracellular domain); the interaction facilitates the inhibition of Wnt signaling. Interacts with LRP5 (via the first two YWTD-EGF repeat domains); the interaction inhibits Wnt-mediated signaling. Interacts with LRP6.

It is found in the secreted. Functionally, negative regulator of bone growth that acts through inhibition of Wnt signaling and bone formation. The protein is Sclerostin of Rattus norvegicus (Rat).